Here is a 140-residue protein sequence, read N- to C-terminus: Gonadotropin subunit beta-2 (140 aa).

The N-terminal stretch at 1 to 23 is a signal peptide; the sequence is MGTPVKILVVLFSVIVLLAVAQS. Disulfide bonds link Cys-29/Cys-77, Cys-43/Cys-92, Cys-46/Cys-130, Cys-54/Cys-108, Cys-58/Cys-110, and Cys-113/Cys-120. An N-linked (GlcNAc...) asparagine glycan is attached at Asn-33.

Belongs to the glycoprotein hormones subunit beta family. In terms of assembly, heterodimer of an alpha and a beta chain.

The protein resides in the secreted. Involved in gametogenesis and steroidogenesis. This chain is Gonadotropin subunit beta-2 (cgbb), found in Carassius auratus (Goldfish).